Consider the following 260-residue polypeptide: Carbonic anhydrase 2 (260 aa).

An Alpha-carbonic anhydrase domain is found at 3-259 (HHWGYDSHNG…LKSREVRASF (257 aa)). H64 (proton donor/acceptor) is an active-site residue. The Zn(2+) site is built by H94, H96, and H119. Substrate is bound at residue 198-199 (TT).

Belongs to the alpha-carbonic anhydrase family. It depends on Zn(2+) as a cofactor.

It localises to the cytoplasm. It is found in the cell membrane. The catalysed reaction is hydrogencarbonate + H(+) = CO2 + H2O. The enzyme catalyses urea = cyanamide + H2O. With respect to regulation, inhibited by acetazolamide. In terms of biological role, catalyzes the reversible hydration of carbon dioxide. Can also hydrate cyanamide to urea. The sequence is that of Carbonic anhydrase 2 (CA2) from Gallus gallus (Chicken).